Reading from the N-terminus, the 332-residue chain is Lipoyl synthase (332 aa).

Positions 55, 60, 66, 81, 85, 88, and 292 each coordinate [4Fe-4S] cluster. Residues Trp67–Leu281 form the Radical SAM core domain.

Belongs to the radical SAM superfamily. Lipoyl synthase family. The cofactor is [4Fe-4S] cluster.

The protein localises to the cytoplasm. The catalysed reaction is [[Fe-S] cluster scaffold protein carrying a second [4Fe-4S](2+) cluster] + N(6)-octanoyl-L-lysyl-[protein] + 2 oxidized [2Fe-2S]-[ferredoxin] + 2 S-adenosyl-L-methionine + 4 H(+) = [[Fe-S] cluster scaffold protein] + N(6)-[(R)-dihydrolipoyl]-L-lysyl-[protein] + 4 Fe(3+) + 2 hydrogen sulfide + 2 5'-deoxyadenosine + 2 L-methionine + 2 reduced [2Fe-2S]-[ferredoxin]. It functions in the pathway protein modification; protein lipoylation via endogenous pathway; protein N(6)-(lipoyl)lysine from octanoyl-[acyl-carrier-protein]: step 2/2. Catalyzes the radical-mediated insertion of two sulfur atoms into the C-6 and C-8 positions of the octanoyl moiety bound to the lipoyl domains of lipoate-dependent enzymes, thereby converting the octanoylated domains into lipoylated derivatives. The polypeptide is Lipoyl synthase (Beutenbergia cavernae (strain ATCC BAA-8 / DSM 12333 / CCUG 43141 / JCM 11478 / NBRC 16432 / NCIMB 13614 / HKI 0122)).